Reading from the N-terminus, the 158-residue chain is Ribosome maturation factor RimP (158 aa).

This sequence belongs to the RimP family.

It is found in the cytoplasm. Its function is as follows. Required for maturation of 30S ribosomal subunits. The protein is Ribosome maturation factor RimP of Pseudomonas fluorescens (strain SBW25).